A 109-amino-acid polypeptide reads, in one-letter code: Thioredoxin (109 aa).

Positions 2–109 constitute a Thioredoxin domain; that stretch reads TNCIVELTDG…LKDFLNLYLK (108 aa). Cys-33 and Cys-36 are oxidised to a cystine.

It belongs to the thioredoxin family.

In terms of biological role, participates in various redox reactions through the reversible oxidation of its active center dithiol to a disulfide and catalyzes dithiol-disulfide exchange reactions. The protein is Thioredoxin (trxA) of Buchnera aphidicola subsp. Baizongia pistaciae (strain Bp).